Consider the following 503-residue polypeptide: ATP synthase subunit alpha (503 aa).

170–177 provides a ligand contact to ATP; sequence GDRQTGKT.

Belongs to the ATPase alpha/beta chains family. As to quaternary structure, F-type ATPases have 2 components, CF(1) - the catalytic core - and CF(0) - the membrane proton channel. CF(1) has five subunits: alpha(3), beta(3), gamma(1), delta(1), epsilon(1). CF(0) has three main subunits: a(1), b(2) and c(9-12). The alpha and beta chains form an alternating ring which encloses part of the gamma chain. CF(1) is attached to CF(0) by a central stalk formed by the gamma and epsilon chains, while a peripheral stalk is formed by the delta and b chains.

It localises to the cell inner membrane. The catalysed reaction is ATP + H2O + 4 H(+)(in) = ADP + phosphate + 5 H(+)(out). In terms of biological role, produces ATP from ADP in the presence of a proton gradient across the membrane. The alpha chain is a regulatory subunit. This is ATP synthase subunit alpha from Pseudothermotoga lettingae (strain ATCC BAA-301 / DSM 14385 / NBRC 107922 / TMO) (Thermotoga lettingae).